The following is a 225-amino-acid chain: Ferric nitrobindin-like protein (225 aa).

The short motif at 78 to 84 is the GXWXGXG element; that stretch reads GVWRGTG.

This sequence belongs to the nitrobindin family.

In Corynebacterium diphtheriae (strain ATCC 700971 / NCTC 13129 / Biotype gravis), this protein is Ferric nitrobindin-like protein.